Reading from the N-terminus, the 121-residue chain is Immunoglobulin kappa variable 2-40 (121 aa).

The signal sequence occupies residues 1 to 19 (MRLPAQLLGLLMLWVPGSS). The Ig-like domain maps to 20–121 (EDIVMTQTPL…YYCMQRIEFP (102 aa)). The tract at residues 21-43 (DIVMTQTPLSLPVTPGEPASISC) is framework-1. The cysteines at positions 43 and 114 are disulfide-linked. Residues 44-60 (RSSQSLLDSDDGNTYLD) are complementarity-determining-1. The interval 61 to 75 (WYLQKPGQSPQLLIY) is framework-2. A complementarity-determining-2 region spans residues 76 to 82 (TLSYRAS). The segment at 83 to 114 (GVPDRFSGSGSGTDFTLKISRVEAEDVGVYYC) is framework-3. Residues 115-121 (MQRIEFP) are complementarity-determining-3.

Immunoglobulins are composed of two identical heavy chains and two identical light chains; disulfide-linked.

It localises to the secreted. The protein resides in the cell membrane. V region of the variable domain of immunoglobulin light chains that participates in the antigen recognition. Immunoglobulins, also known as antibodies, are membrane-bound or secreted glycoproteins produced by B lymphocytes. In the recognition phase of humoral immunity, the membrane-bound immunoglobulins serve as receptors which, upon binding of a specific antigen, trigger the clonal expansion and differentiation of B lymphocytes into immunoglobulins-secreting plasma cells. Secreted immunoglobulins mediate the effector phase of humoral immunity, which results in the elimination of bound antigens. The antigen binding site is formed by the variable domain of one heavy chain, together with that of its associated light chain. Thus, each immunoglobulin has two antigen binding sites with remarkable affinity for a particular antigen. The variable domains are assembled by a process called V-(D)-J rearrangement and can then be subjected to somatic hypermutations which, after exposure to antigen and selection, allow affinity maturation for a particular antigen. The chain is Immunoglobulin kappa variable 2-40 from Homo sapiens (Human).